The primary structure comprises 443 residues: MVLDSLGRALSNALKKIARAGSVDEALVKEVVRDIQRALLQADVNVRLVLKLTKEIQRRALEEKPPAGISKKEHIIKIVYEELTKFLGTEAKPIEIKEKPTVLLTVGVQGSGKTTTVAKLARYFQKRGYKVGVVCSDTWRPGAYHQLKQLLDPYHIEVFGDPNEKDAVKLAKEGVEYFKTRDVDLIIVDTAGRHKEEKDLIEEMRMISEEIRPHEVILVIDGTIGQQAYNQALAFKEATPIGSIIVTKLDSSAKGGGALSAVAATGAPIKFIGVGEKIDDLEPFDPARFVSRLLGLGDIQGLLEKFKELEKEVEFTEEDIDRFLRGKFTLKDMYAQLEAMRKMGPLKQILRMIPGLGYSLPDELISVGEERLRKFKVIMDSMTEEELMNPEIINYSRIKRIARGSGTSIKDVKELLTQYNQMKKFFKSMNKRQLSRLARRFGM.

GTP is bound by residues 107-114 (GVQGSGKT), 189-193 (DTAGR), and 247-250 (TKLD).

Belongs to the GTP-binding SRP family. SRP54 subfamily. Part of the signal recognition particle protein translocation system, which is composed of SRP and FtsY. Archaeal SRP consists of a 7S RNA molecule of 300 nucleotides and two protein subunits: SRP54 and SRP19.

The protein resides in the cytoplasm. It catalyses the reaction GTP + H2O = GDP + phosphate + H(+). In terms of biological role, involved in targeting and insertion of nascent membrane proteins into the cytoplasmic membrane. Binds to the hydrophobic signal sequence of the ribosome-nascent chain (RNC) as it emerges from the ribosomes. The SRP-RNC complex is then targeted to the cytoplasmic membrane where it interacts with the SRP receptor FtsY. The protein is Signal recognition particle 54 kDa protein of Pyrococcus horikoshii (strain ATCC 700860 / DSM 12428 / JCM 9974 / NBRC 100139 / OT-3).